The chain runs to 191 residues: Probable nicotinate-nucleotide adenylyltransferase (191 aa).

This sequence belongs to the NadD family.

The catalysed reaction is nicotinate beta-D-ribonucleotide + ATP + H(+) = deamido-NAD(+) + diphosphate. The protein operates within cofactor biosynthesis; NAD(+) biosynthesis; deamido-NAD(+) from nicotinate D-ribonucleotide: step 1/1. Catalyzes the reversible adenylation of nicotinate mononucleotide (NaMN) to nicotinic acid adenine dinucleotide (NaAD). The protein is Probable nicotinate-nucleotide adenylyltransferase of Oceanobacillus iheyensis (strain DSM 14371 / CIP 107618 / JCM 11309 / KCTC 3954 / HTE831).